Consider the following 545-residue polypeptide: DnaJ homolog subfamily C member 21 (545 aa).

A J domain is found at 3 to 69 (CHYEVLGVKR…QERAWYDNHR (67 aa)). 4 disordered regions span residues 122–141 (EKEH…SFGE), 276–302 (EYGQ…IANV), 331–497 (SFKS…KEVN), and 522–545 (HATA…RKNR). Acidic residues-rich tracts occupy residues 129–141 (EEDE…SFGE) and 283–295 (DASD…EELE). Residues 180-286 (RWEKRAMEKE…YGQEFGDASD (107 aa)) adopt a coiled-coil conformation. The segment at 323–347 (LYCPACDKSFKSDKAMKNHSKSKKH) adopts a C2H2-type 1 zinc-finger fold. Residues 339-348 (KNHSKSKKHR) show a composition bias toward basic residues. Over residues 372 to 388 (REEDDEEEDDDDDDEQN) the composition is skewed to acidic residues. Residues 394–406 (KLSKRQKKKKRLQ) show a composition bias toward basic residues. A C2H2-type 2 zinc finger spans residues 498–522 (LRCVTCQYEFTTRNKLFDHLKSTGH). The segment covering 535–545 (SKKKKDSRKNR) has biased composition (basic residues).

Functionally, may act as a co-chaperone for HSP70. This chain is DnaJ homolog subfamily C member 21 (dnajc21), found in Danio rerio (Zebrafish).